A 341-amino-acid chain; its full sequence is MLLSCSIFRLFCIILLLQLGSIYTKDFTALCSTCRQLVDDFDKGLEKTAKQNFGGGNTAWEERKLSKYETSEIRLTEILEGLCQSSNFECSHMLEENEEHLEAWWFKRKTKHPDLFKWFCIETIKVCCPKGSFGPDCNTCIGGADRPCHGNGKCDGDGTRAGNGKCSCDEGYDGEFCLDCSDGYFNSLRNDTFFLCKECHESCVGCSGGTNQHCKECRNGWVKDQEGSCIDINECIKDPAPCSDDQYCLNTDGSFSCKACDIRCTGCKGDGASSCLNCADGYKDEEGTCTDIDECTEDPASCSDNQHCLNTDGSFSCEEKVPAFNSEGAKTGDSPEKHEDL.

Positions 1–24 (MLLSCSIFRLFCIILLLQLGSIYT) are cleaved as a signal peptide. The EGF-like domain maps to 136-178 (DCNTCIGGADRPCHGNGKCDGDGTRAGNGKCSCDEGYDGEFCL). 3 disulfide bridges follow: Cys140/Cys154, Cys148/Cys166, and Cys168/Cys177. Asn190 carries an N-linked (GlcNAc...) asparagine glycan. FU repeat units lie at residues 193–248 (FFLC…DQYC) and 254–308 (SFSC…NQHC). The EGF-like 2; calcium-binding; truncated domain maps to 291 to 317 (DIDECTEDPASCSDNQHCLNTDGSFSC).

Belongs to the CRELD family.

It localises to the secreted. The protein localises to the endoplasmic reticulum. Its function is as follows. Possible role in neuronal acetylcholine receptor transport. This is Cysteine-rich with EGF-like domain protein 2 (creld2) from Danio rerio (Zebrafish).